The chain runs to 173 residues: Protein FAM180A (173 aa).

The first 17 residues, 1-17, serve as a signal peptide directing secretion; that stretch reads MSWKALTILLVFSSTQA.

The protein belongs to the FAM180 family.

It localises to the secreted. The chain is Protein FAM180A (Fam180a) from Mus musculus (Mouse).